Here is a 484-residue protein sequence, read N- to C-terminus: Glutamate--tRNA ligase (484 aa).

The 'HIGH' region signature appears at 11-21 (PSPTGLLHIGN). The 'KMSKS' region signature appears at 255-259 (KLSKR). ATP is bound at residue K258.

It belongs to the class-I aminoacyl-tRNA synthetase family. Glutamate--tRNA ligase type 1 subfamily. Monomer.

The protein resides in the cytoplasm. It carries out the reaction tRNA(Glu) + L-glutamate + ATP = L-glutamyl-tRNA(Glu) + AMP + diphosphate. In terms of biological role, catalyzes the attachment of glutamate to tRNA(Glu) in a two-step reaction: glutamate is first activated by ATP to form Glu-AMP and then transferred to the acceptor end of tRNA(Glu). This is Glutamate--tRNA ligase from Streptococcus agalactiae serotype III (strain NEM316).